We begin with the raw amino-acid sequence, 622 residues long: WD repeat-containing protein 48 (622 aa).

Tyr28 is subject to Phosphotyrosine. WD repeat units lie at residues 28 to 67 (YNRN…QDPY), 73 to 112 (HHTD…CMST), 115 to 154 (THKD…ALTA), 166 to 205 (GNKD…KLMK), 208 to 247 (GHTD…CIAT), 250 to 289 (VHDE…IRVL), 292 to 334 (EEKA…NFRA), and 358 to 397 (KGGA…GFSS). N6-acetyllysine is present on Lys214. Position 523 is an N6-acetyllysine (Lys523). Residues 552–573 (LDNESQTTSSSNNEKPGEQEKE) are disordered. Positions 554–565 (NESQTTSSSNNE) are enriched in low complexity. Position 558 is a phosphothreonine (Thr558).

It belongs to the WD repeat WDR48 family. Interacts with USP46. Interacts with USP1. Interacts with USP12. Component of the USP12-WDR20-WDR48 deubiquitinating complex. Component of the USP12-DMWD-WDR48 deubiquitinating complex. Interacts with PHLPP1. Interacts with RAD51AP1; the interaction is direct and promotes formation of a trimeric complex with RAD51 via RAD51AP1. Interacts with ATAD5; the interaction regulates USP1-mediated PCNA deubiquitination. Interacts with RAD51; the interaction is enhanced under replication stress. Interacts with ITCH; the interaction is more efficient when both USP12 and WDR48/UAF1 are involved and may facilitate recruitment of the USP12 deubiquitinating complex to Notch.

The protein localises to the nucleus. It localises to the cytoplasm. The protein resides in the lysosome. It is found in the late endosome. Regulator of deubiquitinating complexes, which acts as a strong activator of USP1, USP12 and USP46. Enhances the USP1-mediated deubiquitination of FANCD2; USP1 being almost inactive by itself. Activates deubiquitination by increasing the catalytic turnover without increasing the affinity of deubiquitinating enzymes for the substrate. Also activates deubiquitinating activity of complexes containing USP12. Docks at the distal end of the USP12 fingers domain and induces a cascade of structural changes leading to the activation of the enzyme. Together with RAD51AP1, promotes DNA repair by stimulating RAD51-mediated homologous recombination. Binds single-stranded DNA (ssDNA) and double-stranded DNA (dsDNA). DNA-binding is required both for USP1-mediated deubiquitination of FANCD2 and stimulation of RAD51-mediated homologous recombination: both WDR48/UAF1 and RAD51AP1 have coordinated role in DNA-binding during these processes. Together with ATAD5 and by regulating USP1 activity, has a role in PCNA-mediated translesion synthesis (TLS) by deubiquitinating monoubiquitinated PCNA. Together with ATAD5, has a role in recruiting RAD51 to stalled forks during replication stress. This Macaca fascicularis (Crab-eating macaque) protein is WD repeat-containing protein 48 (WDR48).